We begin with the raw amino-acid sequence, 115 residues long: Pro-neuregulin-4, membrane-bound isoform (115 aa).

Residues 1–62 (MPTDHEQPCG…SSIPSESNLS (62 aa)) are Extracellular-facing. The EGF-like domain maps to 5 to 46 (HEQPCGPRHRSFCLNGGICYVIPTIPSPFCRCIENYTGARCE). Intrachain disulfides connect cysteine 9/cysteine 23, cysteine 17/cysteine 34, and cysteine 36/cysteine 45. Residues asparagine 39 and asparagine 60 are each glycosylated (N-linked (GlcNAc...) asparagine). A helical transmembrane segment spans residues 63 to 83 (AAFVVLAVLLTLTIAALCFLC). Residues 84–115 (RKGHLQRASSVQCEISLVETNNTRTRHSHREH) lie on the Cytoplasmic side of the membrane.

It belongs to the neuregulin family. Interacts with ERBB4. In terms of processing, proteolytic cleavage close to the plasma membrane on the external face leads to the release of the soluble growth factor form. Extensive glycosylation precedes the proteolytic cleavage. As to expression, highly expressed in pancreas; weakly expressed in muscle.

It is found in the cell membrane. It localises to the secreted. In terms of biological role, low affinity ligand for the ERBB4 tyrosine kinase receptor. Concomitantly recruits ERBB1 and ERBB2 coreceptors, resulting in ligand-stimulated tyrosine phosphorylation and activation of the ERBB receptors. Does not bind to the ERBB1, ERBB2 and ERBB3 receptors. The chain is Pro-neuregulin-4, membrane-bound isoform (Nrg4) from Mus musculus (Mouse).